The following is a 505-amino-acid chain: Probable malate:quinone oxidoreductase (505 aa).

Belongs to the MQO family. It depends on FAD as a cofactor.

It carries out the reaction (S)-malate + a quinone = a quinol + oxaloacetate. It participates in carbohydrate metabolism; tricarboxylic acid cycle; oxaloacetate from (S)-malate (quinone route): step 1/1. The sequence is that of Probable malate:quinone oxidoreductase from Pseudomonas fluorescens.